An 829-amino-acid chain; its full sequence is Probable beta-glucosidase H (829 aa).

N13 is a glycosylation site (N-linked (GlcNAc...) asparagine). The active site involves D225. N304, N473, N602, N627, and N664 each carry an N-linked (GlcNAc...) asparagine glycan. The PA14 domain occupies 389-548 (RMLSNAVIHF…DPEQMVANAV (160 aa)).

It belongs to the glycosyl hydrolase 3 family.

The protein localises to the secreted. The catalysed reaction is Hydrolysis of terminal, non-reducing beta-D-glucosyl residues with release of beta-D-glucose.. It functions in the pathway glycan metabolism; cellulose degradation. In terms of biological role, beta-glucosidases are one of a number of cellulolytic enzymes involved in the degradation of cellulosic biomass. Catalyzes the last step releasing glucose from the inhibitory cellobiose. This is Probable beta-glucosidase H (bglH) from Aspergillus fumigatus (strain ATCC MYA-4609 / CBS 101355 / FGSC A1100 / Af293) (Neosartorya fumigata).